A 72-amino-acid polypeptide reads, in one-letter code: Putative beta-neurotoxin (72 aa).

Positions 1–7 are cleaved as a signal peptide; that stretch reads IDMVVEC. Residues 9–71 enclose the LCN-type CS-alpha/beta domain; the sequence is KDGYLMEHDG…TWSRATNRCG (63 aa). Cystine bridges form between Cys19–Cys70, Cys23–Cys45, Cys31–Cys51, and Cys35–Cys53.

Expressed by the venom gland.

The protein resides in the secreted. Functionally, beta toxins bind voltage-independently at site-4 of sodium channels (Nav) and shift the voltage of activation toward more negative potentials thereby affecting sodium channel activation and promoting spontaneous and repetitive firing. This is Putative beta-neurotoxin from Tityus pachyurus (Colombian scorpion).